Here is a 315-residue protein sequence, read N- to C-terminus: Methionyl-tRNA formyltransferase (315 aa).

113–116 (SLLP) lines the (6S)-5,6,7,8-tetrahydrofolate pocket.

This sequence belongs to the Fmt family.

The catalysed reaction is L-methionyl-tRNA(fMet) + (6R)-10-formyltetrahydrofolate = N-formyl-L-methionyl-tRNA(fMet) + (6S)-5,6,7,8-tetrahydrofolate + H(+). Functionally, attaches a formyl group to the free amino group of methionyl-tRNA(fMet). The formyl group appears to play a dual role in the initiator identity of N-formylmethionyl-tRNA by promoting its recognition by IF2 and preventing the misappropriation of this tRNA by the elongation apparatus. This Pectobacterium carotovorum subsp. carotovorum (strain PC1) protein is Methionyl-tRNA formyltransferase.